The primary structure comprises 121 residues: Acid shock protein (121 aa).

The N-terminal stretch at 1 to 21 (MKKVLALMVAATLGLSSVAFA) is a signal peptide. Residues 22-63 (ADTTATATPAATSTTATVAAQTKATQHQKHKVTKKTTEQKAQ) constitute a propeptide that is removed on maturation. The interval 40–121 (AAQTKATQHQ…AKKPVAAPAA (82 aa)) is disordered. The span at 84 to 93 (AAKKHVKKAS) shows a compositional bias: basic residues. Residues 94 to 103 (VQKAPVQKAQ) are compositionally biased toward low complexity. The segment covering 104-113 (AAKKHHKTAK) has biased composition (basic residues).

Belongs to the Asr family. Post-translationally, proteolytic processing gives rise to the active protein.

Its subcellular location is the periplasm. In terms of biological role, required for growth and/or survival at acidic conditions. The sequence is that of Acid shock protein from Yersinia pestis bv. Antiqua (strain Antiqua).